The primary structure comprises 316 residues: Ribosomal RNA small subunit methyltransferase H (316 aa).

S-adenosyl-L-methionine is bound by residues 35–37, Asp55, Phe84, Asp105, and Gln112; that span reads AGH.

It belongs to the methyltransferase superfamily. RsmH family.

Its subcellular location is the cytoplasm. It catalyses the reaction cytidine(1402) in 16S rRNA + S-adenosyl-L-methionine = N(4)-methylcytidine(1402) in 16S rRNA + S-adenosyl-L-homocysteine + H(+). Functionally, specifically methylates the N4 position of cytidine in position 1402 (C1402) of 16S rRNA. In Streptococcus suis (strain 05ZYH33), this protein is Ribosomal RNA small subunit methyltransferase H.